We begin with the raw amino-acid sequence, 504 residues long: Ent-kaurene oxidase-like 3 (504 aa).

A helical membrane pass occupies residues 3–23 (SLLAAGAGGIGVAAAAVGGFI). Cys448 is a binding site for heme.

It belongs to the cytochrome P450 family. Requires heme as cofactor. Expressed in leaf blades.

It is found in the membrane. Functionally, may hydroxylate diterpenes. This Oryza sativa subsp. japonica (Rice) protein is Ent-kaurene oxidase-like 3.